We begin with the raw amino-acid sequence, 462 residues long: TNF receptor-associated factor family protein DDB_G0267754 (462 aa).

Residues 24–62 (CCVCECLLIEALQCRNGHVACKNCFIKIVKSKKECMTCR) form an RING-type; degenerate zinc finger. The disordered stretch occupies residues 104 to 127 (KNGNGNEGSSANEIEQPQQPQQQQ). 2 consecutive TRAF-type zinc fingers follow at residues 150–217 (SHLK…SHTE) and 214–273 (SHTE…NQLA). Residues 326–449 (MFRGKWVISN…NDTLTINFSI (124 aa)) enclose the MATH domain.

Belongs to the TNF receptor-associated factor family. A subfamily.

Its subcellular location is the cytoplasm. Probable adapter protein and signal transducer that links members of the tumor necrosis factor receptor family to different signaling pathways by association with the receptor cytoplasmic domain and kinases. The sequence is that of TNF receptor-associated factor family protein DDB_G0267754 from Dictyostelium discoideum (Social amoeba).